Here is a 95-residue protein sequence, read N- to C-terminus: Cytochrome b-c1 complex subunit 8, mitochondrial (95 aa).

The helical transmembrane segment at 57–74 threads the bilayer; that stretch reads FLYVAIPFVVVWSIWTRA.

It belongs to the UQCRQ/QCR8 family. In terms of assembly, component of the ubiquinol-cytochrome c oxidoreductase (cytochrome b-c1 complex, complex III, CIII), a multisubunit enzyme composed of 10 subunits. The complex is composed of 3 respiratory subunits cytochrome b (COB), cytochrome c1 (CYT1) and Rieske protein (RIP1), 2 core protein subunits COR1 and QCR2, and 5 low-molecular weight protein subunits QCR6, QCR7, QCR8, QCR9 and QCR10. The complex exists as an obligatory dimer and forms supercomplexes (SCs) in the inner mitochondrial membrane with a monomer or a dimer of cytochrome c oxidase (complex IV, CIV), resulting in 2 different assemblies (supercomplexes III(2)IV and III(2)IV(2)).

The protein localises to the membrane. The protein resides in the mitochondrion inner membrane. Its function is as follows. Component of the ubiquinol-cytochrome c oxidoreductase, a multisubunit transmembrane complex that is part of the mitochondrial electron transport chain which drives oxidative phosphorylation. The complex plays an important role in the uptake of multiple carbon sources present in different host niches. The sequence is that of Cytochrome b-c1 complex subunit 8, mitochondrial from Candida albicans (strain SC5314 / ATCC MYA-2876) (Yeast).